A 311-amino-acid polypeptide reads, in one-letter code: DNA-directed RNA polymerase subunit alpha (311 aa).

Residues 1 to 227 are alpha N-terminal domain (alpha-NTD); that stretch reads MAQFQIECVE…NLFCSLRNLD (227 aa). The segment at 242 to 311 is alpha C-terminal domain (alpha-CTD); it reads ISQVLIEELQ…GISLPKEKTD (70 aa).

The protein belongs to the RNA polymerase alpha chain family. In terms of assembly, in plastids the minimal PEP RNA polymerase catalytic core is composed of four subunits: alpha, beta, beta', and beta''. When a (nuclear-encoded) sigma factor is associated with the core the holoenzyme is formed, which can initiate transcription.

It localises to the plastid. It is found in the chloroplast. It catalyses the reaction RNA(n) + a ribonucleoside 5'-triphosphate = RNA(n+1) + diphosphate. Functionally, DNA-dependent RNA polymerase catalyzes the transcription of DNA into RNA using the four ribonucleoside triphosphates as substrates. This chain is DNA-directed RNA polymerase subunit alpha, found in Porphyra purpurea (Red seaweed).